The primary structure comprises 591 residues: Probable cyclin-dependent kinase 9 (591 aa).

Residues 1-385 (MKRSSSVSVE…FEQTANGKRQ (385 aa)) are interaction with pch1. The 304-residue stretch at 36 to 339 (YHLMEKLGEG…ASMALEHEYF (304 aa)) folds into the Protein kinase domain. Residues 42-50 (LGEGTFGEV) and lysine 65 contribute to the ATP site. The active-site Proton acceptor is the aspartate 166. The residue at position 211 (tyrosine 211) is a Phosphotyrosine. Threonine 212 bears the Phosphothreonine mark. 2 disordered regions span residues 341 to 534 (TPPY…KTQH) and 549 to 591 (ARQS…DTPK). Residues 358 to 372 (HEYDKRRKREQRDAN) show a composition bias toward basic and acidic residues. 2 stretches are compositionally biased toward polar residues: residues 404–415 (NYNSQPQYQRGS) and 428–465 (NVNYQPKRQQNFKPLTSDLPQKNSEFSETNAMNQTSNH). Positions 442 to 523 (LTSDLPQKNS…NSKVQTTSRA (82 aa)) are binds to pct1. Residues 466-482 (SHADGQRYYRPEQDRSQ) show a composition bias toward basic and acidic residues. Residues 491-502 (GRQGRQSSQSQQ) show a composition bias toward low complexity. Polar residues predominate over residues 503 to 534 (PAWNVSSRYQNNSKVQTTSRASENADTNKTQH). Position 565 is a phosphothreonine (threonine 565). Serine 577 is modified (phosphoserine).

Belongs to the protein kinase superfamily. CMGC Ser/Thr protein kinase family. CDC2/CDKX subfamily. Interacts with pch1 cyclin via its N-terminal domain. Via its C-terminal domain, interacts with RNA triphosphatase pct1 which is involved in mRNA capping. Also interacts with pcm1.

Its subcellular location is the nucleus. The enzyme catalyses L-seryl-[protein] + ATP = O-phospho-L-seryl-[protein] + ADP + H(+). It carries out the reaction L-threonyl-[protein] + ATP = O-phospho-L-threonyl-[protein] + ADP + H(+). The catalysed reaction is [DNA-directed RNA polymerase] + ATP = phospho-[DNA-directed RNA polymerase] + ADP + H(+). With respect to regulation, may be activated by autophosphorylation or phosphorylation by a separate activating kinase. Functionally, component of the positive transcription elongation factor b (P-TEFb) which consists of cdk9 and pch1, and which phosphorylates the C-terminal domain (CTD) of RNA polymerase II and spt5. This is Probable cyclin-dependent kinase 9 (cdk9) from Schizosaccharomyces pombe (strain 972 / ATCC 24843) (Fission yeast).